Consider the following 444-residue polypeptide: Multidrug resistance protein MdtA (444 aa).

Positions 1 to 20 are cleaved as a signal peptide; it reads MKSQSKRTSRLFVFVGVVVA. The span at 37-52 shows a compositional bias: polar residues; that stretch reads NNTSGAQQSARGQDTS. Disordered regions lie at residues 37–60 and 398–444; these read NNTS…RNTP and TPRS…AEKS. Low complexity predominate over residues 406–419; sequence ANPASAEKAAAEAE. A compositionally biased stretch (polar residues) spans 435 to 444; it reads ARSTTAAEKS.

The protein belongs to the membrane fusion protein (MFP) (TC 8.A.1) family. As to quaternary structure, part of a tripartite efflux system composed of MdtA, MdtB and MdtC.

It localises to the cell inner membrane. The chain is Multidrug resistance protein MdtA from Yersinia pestis bv. Antiqua (strain Antiqua).